The chain runs to 298 residues: N-acetylmuramic acid 6-phosphate etherase (298 aa).

Positions 55-218 (IHAQVSGGGR…STGLMIKSGK (164 aa)) constitute an SIS domain. Catalysis depends on E83, which acts as the Proton donor. E114 is an active-site residue.

This sequence belongs to the GCKR-like family. MurNAc-6-P etherase subfamily. As to quaternary structure, homodimer.

The catalysed reaction is N-acetyl-D-muramate 6-phosphate + H2O = N-acetyl-D-glucosamine 6-phosphate + (R)-lactate. It participates in amino-sugar metabolism; 1,6-anhydro-N-acetylmuramate degradation. The protein operates within amino-sugar metabolism; N-acetylmuramate degradation. It functions in the pathway cell wall biogenesis; peptidoglycan recycling. Specifically catalyzes the cleavage of the D-lactyl ether substituent of MurNAc 6-phosphate, producing GlcNAc 6-phosphate and D-lactate. Together with AnmK, is also required for the utilization of anhydro-N-acetylmuramic acid (anhMurNAc) either imported from the medium or derived from its own cell wall murein, and thus plays a role in cell wall recycling. The chain is N-acetylmuramic acid 6-phosphate etherase from Shigella flexneri serotype 5b (strain 8401).